The chain runs to 1374 residues: DNA-directed RNA polymerase subunit beta (1374 aa).

This sequence belongs to the RNA polymerase beta chain family. As to quaternary structure, the RNAP catalytic core consists of 2 alpha, 1 beta, 1 beta' and 1 omega subunit. When a sigma factor is associated with the core the holoenzyme is formed, which can initiate transcription.

It catalyses the reaction RNA(n) + a ribonucleoside 5'-triphosphate = RNA(n+1) + diphosphate. In terms of biological role, DNA-dependent RNA polymerase catalyzes the transcription of DNA into RNA using the four ribonucleoside triphosphates as substrates. This chain is DNA-directed RNA polymerase subunit beta, found in Methylobacterium radiotolerans (strain ATCC 27329 / DSM 1819 / JCM 2831 / NBRC 15690 / NCIMB 10815 / 0-1).